Here is a 248-residue protein sequence, read N- to C-terminus: Probable transcriptional regulatory protein RHOS4_22610 (248 aa).

Residues 1–21 (MAGHSKWANIQHRKGKQDKLR) are disordered.

It belongs to the TACO1 family.

It localises to the cytoplasm. The polypeptide is Probable transcriptional regulatory protein RHOS4_22610 (Cereibacter sphaeroides (strain ATCC 17023 / DSM 158 / JCM 6121 / CCUG 31486 / LMG 2827 / NBRC 12203 / NCIMB 8253 / ATH 2.4.1.) (Rhodobacter sphaeroides)).